Consider the following 226-residue polypeptide: Glyceraldehyde 3-phosphate phosphatase (226 aa).

The protein belongs to the HAD-like hydrolase superfamily. The cofactor is Mg(2+).

Its function is as follows. Catalyzes the dephosphorylation of D,L-glyceraldehyde 3-phosphate in vitro. The protein is Glyceraldehyde 3-phosphate phosphatase of Methanothermobacter thermautotrophicus (strain ATCC 29096 / DSM 1053 / JCM 10044 / NBRC 100330 / Delta H) (Methanobacterium thermoautotrophicum).